The following is a 495-amino-acid chain: UDP-N-acetylmuramoyl-L-alanyl-D-glutamate--2,6-diaminopimelate ligase (495 aa).

UDP-N-acetyl-alpha-D-muramoyl-L-alanyl-D-glutamate-binding positions include Leu-27, Ser-29, and 44 to 46 (HQA). 116-122 (GTNGKTT) serves as a coordination point for ATP. Residues Asn-157, 158–159 (TT), Ser-185, Gln-191, and Arg-193 each bind UDP-N-acetyl-alpha-D-muramoyl-L-alanyl-D-glutamate. N6-carboxylysine is present on Lys-225. Meso-2,6-diaminopimelate-binding positions include Arg-390, 414-417 (DNPR), Gly-465, and Glu-469. Residues 414 to 417 (DNPR) carry the Meso-diaminopimelate recognition motif motif.

The protein belongs to the MurCDEF family. MurE subfamily. Mg(2+) is required as a cofactor. In terms of processing, carboxylation is probably crucial for Mg(2+) binding and, consequently, for the gamma-phosphate positioning of ATP.

Its subcellular location is the cytoplasm. It carries out the reaction UDP-N-acetyl-alpha-D-muramoyl-L-alanyl-D-glutamate + meso-2,6-diaminopimelate + ATP = UDP-N-acetyl-alpha-D-muramoyl-L-alanyl-gamma-D-glutamyl-meso-2,6-diaminopimelate + ADP + phosphate + H(+). It participates in cell wall biogenesis; peptidoglycan biosynthesis. With respect to regulation, activated by potassium phosphate. Functionally, catalyzes the addition of meso-diaminopimelic acid to the nucleotide precursor UDP-N-acetylmuramoyl-L-alanyl-D-glutamate (UMAG) in the biosynthesis of bacterial cell-wall peptidoglycan. Is also able to use many meso-diaminopimelate analogs as substrates, although much less efficiently, but not L-lysine. In Escherichia coli (strain K12), this protein is UDP-N-acetylmuramoyl-L-alanyl-D-glutamate--2,6-diaminopimelate ligase (murE).